Consider the following 662-residue polypeptide: MEGPTHPKPSKDKTFSWDLMILVGVLLRLDVGMANPSPHQIYNVTWTITNLVTGTKANATSMLGTLTDAFPTMYFDLCDIIGNTWNPSDQEPFPGYGCDQPMRRWQQRNTPFYVCPGHANRKQCGGPQDGFCAVWGCETTGETYWRPTSSWDYITVKKGVTQGIYQCSGGGWCGPCYDKAVHSSITGASEGGRCNPLILQFTQKGRQTSWDGPKSWGLRLYRSGYDPIALFSVSRQVMTITLPQAMGPNLVLPDQKPPSRQSQIESRVTPHHSQGNGGTPGITLVNASIAPLSTPVTPASPKRIGTGNRLINLVQGTYLALNVTNPNKTKDCWLCLVSRPPYYEGIAVLGNYSNQTNPPPSCLSDPQHKLTISEVSGQGSCIGTVPKTHQALCKKTQKGHKGTHYLAAPSGTYWACNTGLTPCISMAVLNWTSDFCVLIELWPRVTYHQPEYVYTHFDKTVRLRREPISLTVALMLGGLTVGGIAAGVGTGTKALLETAQFGQLQMAMHTDIQALEESISALEKSLTSLSEVVLQNRRGLDILFLQEGGLCAALKEECCFYADHTGLVRDNMAKLRERLKQRQQLFDSQQGWFEGWFNKSPWFTTLISSIMGPLLILLLILLFGPCILNRLVQFVKDRISVVQALILTQQYQQIKQYDPDQP.

The first 34 residues, 1–34 (MEGPTHPKPSKDKTFSWDLMILVGVLLRLDVGMA), serve as a signal peptide directing secretion. At 35 to 606 (NPSPHQIYNV…FNKSPWFTTL (572 aa)) the chain is on the extracellular side. N-linked (GlcNAc...) asparagine; by host glycans are attached at residues Asn43 and Asn58. Intrachain disulfides connect Cys115–Cys132 and Cys124–Cys137. Positions 251–281 (VLPDQKPPSRQSQIESRVTPHHSQGNGGTPG) are disordered. Residues 258–274 (PSRQSQIESRVTPHHSQ) show a composition bias toward polar residues. 3 N-linked (GlcNAc...) asparagine; by host glycosylation sites follow: Asn286, Asn322, and Asn327. 3 cysteine pairs are disulfide-bonded: Cys332–Cys335, Cys332–Cys559, and Cys551–Cys558. The CXXC motif lies at 332-335 (CWLC). N-linked (GlcNAc...) asparagine; by host glycosylation is found at Asn351, Asn354, and Asn430. The tract at residues 468-488 (ISLTVALMLGGLTVGGIAAGV) is fusion peptide. Coiled coils occupy residues 496–545 (LETA…ILFL) and 555–591 (KEEC…SQQG). Residues 534–550 (LQNRRGLDILFLQEGGL) are immunosuppression. The short motif at 551 to 559 (CAALKEECC) is the CX6CC element. A helical transmembrane segment spans residues 607 to 627 (ISSIMGPLLILLLILLFGPCI). Cys626 carries the S-palmitoyl cysteine; by host lipid modification. At 628-662 (LNRLVQFVKDRISVVQALILTQQYQQIKQYDPDQP) the chain is on the cytoplasmic side.

The mature envelope protein (Env) consists of a trimer of SU-TM heterodimers attached by a labile interchain disulfide bond. Post-translationally, specific enzymatic cleavages in vivo yield mature proteins. Envelope glycoproteins are synthesized as an inactive precursor that is N-glycosylated and processed likely by host cell furin or by a furin-like protease in the Golgi to yield the mature SU and TM proteins. The cleavage site between SU and TM requires the minimal sequence [KR]-X-[KR]-R. The R-peptide is released from the C-terminus of the cytoplasmic tail of the TM protein upon particle formation as a result of proteolytic cleavage by the viral protease. Cleavage of this peptide is required for TM to become fusogenic. In terms of processing, the CXXC motif is highly conserved across a broad range of retroviral envelope proteins. It is thought to participate in the formation of a labile disulfide bond possibly with the CX6CC motif present in the transmembrane protein. Isomerization of the intersubunit disulfide bond to an SU intrachain disulfide bond is thought to occur upon receptor recognition in order to allow membrane fusion. The transmembrane protein is palmitoylated. Post-translationally, the R-peptide is palmitoylated.

It is found in the virion membrane. Its subcellular location is the host cell membrane. The surface protein (SU) attaches the virus to the host cell by binding to its receptor. This interaction triggers the refolding of the transmembrane protein (TM) and is thought to activate its fusogenic potential by unmasking its fusion peptide. Fusion occurs at the host cell plasma membrane. In terms of biological role, the transmembrane protein (TM) acts as a class I viral fusion protein. Under the current model, the protein has at least 3 conformational states: pre-fusion native state, pre-hairpin intermediate state, and post-fusion hairpin state. During viral and target cell membrane fusion, the coiled coil regions (heptad repeats) assume a trimer-of-hairpins structure, positioning the fusion peptide in close proximity to the C-terminal region of the ectodomain. The formation of this structure appears to drive apposition and subsequent fusion of viral and target cell membranes. Membranes fusion leads to delivery of the nucleocapsid into the cytoplasm. The protein is Envelope glycoprotein (env) of Felis catus (Cat).